Reading from the N-terminus, the 122-residue chain is Large ribosomal subunit protein uL14 (122 aa).

Belongs to the universal ribosomal protein uL14 family. Part of the 50S ribosomal subunit. Forms a cluster with proteins L3 and L19. In the 70S ribosome, L14 and L19 interact and together make contacts with the 16S rRNA in bridges B5 and B8.

Its function is as follows. Binds to 23S rRNA. Forms part of two intersubunit bridges in the 70S ribosome. This is Large ribosomal subunit protein uL14 from Acinetobacter baumannii (strain SDF).